The following is a 126-amino-acid chain: Holo-[acyl-carrier-protein] synthase (126 aa).

Positions 9 and 58 each coordinate Mg(2+).

The protein belongs to the P-Pant transferase superfamily. AcpS family. Mg(2+) is required as a cofactor.

Its subcellular location is the cytoplasm. The enzyme catalyses apo-[ACP] + CoA = holo-[ACP] + adenosine 3',5'-bisphosphate + H(+). Transfers the 4'-phosphopantetheine moiety from coenzyme A to a Ser of acyl-carrier-protein. The protein is Holo-[acyl-carrier-protein] synthase of Aliivibrio salmonicida (strain LFI1238) (Vibrio salmonicida (strain LFI1238)).